A 407-amino-acid polypeptide reads, in one-letter code: Peptidase T (407 aa).

Residue H82 participates in Zn(2+) binding. The active site involves D84. Zn(2+) is bound at residue D143. E177 serves as the catalytic Proton acceptor. 3 residues coordinate Zn(2+): E178, D200, and H382.

It belongs to the peptidase M20B family. Requires Zn(2+) as cofactor.

Its subcellular location is the cytoplasm. The catalysed reaction is Release of the N-terminal residue from a tripeptide.. Cleaves the N-terminal amino acid of tripeptides. This Streptococcus pyogenes serotype M1 protein is Peptidase T.